Consider the following 161-residue polypeptide: Nucleotide-binding protein Tbd_1846 (161 aa).

This sequence belongs to the YajQ family.

Its function is as follows. Nucleotide-binding protein. This Thiobacillus denitrificans (strain ATCC 25259 / T1) protein is Nucleotide-binding protein Tbd_1846.